Here is a 256-residue protein sequence, read N- to C-terminus: Small ribosomal subunit protein uS2 (256 aa).

It belongs to the universal ribosomal protein uS2 family.

This is Small ribosomal subunit protein uS2 from Brucella abortus (strain S19).